The chain runs to 448 residues: DEAD-box ATP-dependent RNA helicase CshB (448 aa).

Positions 4–32 (HPFEQFNLESSLIDAVKDLNFEKPTEIQN) match the Q motif motif. A Helicase ATP-binding domain is found at 35–206 (IPRILKRTNL…NKYLSHPEYV (172 aa)). 48–55 (SQTGTGKS) provides a ligand contact to ATP. The DEAD box motif lies at 154–157 (DEAD). Positions 236–386 (NLIDILNPYL…EVKAHNQRQA (151 aa)) constitute a Helicase C-terminal domain. Residues 400–418 (NKVRSKIKNKVKPGYKKKF) show a composition bias toward basic residues. The interval 400–448 (NKVRSKIKNKVKPGYKKKFKQEVEKMKRQERKQFSKQQNRQKRKQNKKG) is disordered. The segment covering 419 to 432 (KQEVEKMKRQERKQ) has biased composition (basic and acidic residues). The segment covering 438 to 448 (NRQKRKQNKKG) has biased composition (basic residues).

It belongs to the DEAD box helicase family. CshB subfamily.

The protein resides in the cytoplasm. It catalyses the reaction ATP + H2O = ADP + phosphate + H(+). Its function is as follows. Probable DEAD-box RNA helicase. May work in conjunction with the cold shock proteins to ensure proper initiation of transcription at low and optimal temperatures. This chain is DEAD-box ATP-dependent RNA helicase CshB, found in Staphylococcus aureus (strain NCTC 8325 / PS 47).